The primary structure comprises 267 residues: Mlc titration factor A (267 aa).

His111, His148, His152, and Glu211 together coordinate Zn(2+).

It belongs to the MtfA family. In terms of assembly, interacts with Mlc. Requires Zn(2+) as cofactor.

The protein resides in the cytoplasm. Involved in the modulation of the activity of the glucose-phosphotransferase system (glucose-PTS). Interacts with the transcriptional repressor Mlc, preventing its interaction with DNA and leading to the modulation of expression of genes regulated by Mlc, including ptsG, which encodes the PTS system glucose-specific EIICB component. Its function is as follows. Shows zinc-dependent metallopeptidase activity. The chain is Mlc titration factor A from Yersinia enterocolitica serotype O:8 / biotype 1B (strain NCTC 13174 / 8081).